We begin with the raw amino-acid sequence, 384 residues long: S-adenosylmethionine synthase (384 aa).

Position 15 (histidine 15) interacts with ATP. Aspartate 17 contributes to the Mg(2+) binding site. Position 43 (glutamate 43) interacts with K(+). 2 residues coordinate L-methionine: glutamate 56 and glutamine 99. Positions glutamine 99–arginine 109 are flexible loop. ATP contacts are provided by residues aspartate 164–lysine 166, arginine 231–phenylalanine 232, aspartate 240, arginine 246–lysine 247, alanine 263, and lysine 267. Aspartate 240 serves as a coordination point for L-methionine. Lysine 271 contacts L-methionine.

The protein belongs to the AdoMet synthase family. Homotetramer; dimer of dimers. It depends on Mg(2+) as a cofactor. K(+) serves as cofactor.

It is found in the cytoplasm. The catalysed reaction is L-methionine + ATP + H2O = S-adenosyl-L-methionine + phosphate + diphosphate. It functions in the pathway amino-acid biosynthesis; S-adenosyl-L-methionine biosynthesis; S-adenosyl-L-methionine from L-methionine: step 1/1. Functionally, catalyzes the formation of S-adenosylmethionine (AdoMet) from methionine and ATP. The overall synthetic reaction is composed of two sequential steps, AdoMet formation and the subsequent tripolyphosphate hydrolysis which occurs prior to release of AdoMet from the enzyme. The chain is S-adenosylmethionine synthase from Shewanella pealeana (strain ATCC 700345 / ANG-SQ1).